Here is a 118-residue protein sequence, read N- to C-terminus: V-type proton ATPase subunit G 1 (118 aa).

N-acetylalanine is present on alanine 2.

It belongs to the V-ATPase G subunit family. In terms of assembly, V-ATPase is a heteromultimeric enzyme made up of two complexes: the ATP-hydrolytic V1 complex and the proton translocation V0 complex. The V1 complex consists of three catalytic AB heterodimers that form a heterohexamer, three peripheral stalks each consisting of EG heterodimers, one central rotor including subunits D and F, and the regulatory subunits C and H. The proton translocation complex V0 consists of the proton transport subunit a, a ring of proteolipid subunits c9c'', rotary subunit d, subunits e and f, and the accessory subunits ATP6AP1/Ac45 and ATP6AP2/PRR. Kidney; localizes to early distal nephron, encompassing thick ascending limbs and distal convoluted tubules (at protein level). Ubiquitous.

It localises to the apical cell membrane. Its function is as follows. Subunit of the V1 complex of vacuolar(H+)-ATPase (V-ATPase), a multisubunit enzyme composed of a peripheral complex (V1) that hydrolyzes ATP and a membrane integral complex (V0) that translocates protons. V-ATPase is responsible for acidifying and maintaining the pH of intracellular compartments and in some cell types, is targeted to the plasma membrane, where it is responsible for acidifying the extracellular environment. In aerobic conditions, involved in intracellular iron homeostasis, thus triggering the activity of Fe(2+) prolyl hydroxylase (PHD) enzymes, and leading to HIF1A hydroxylation and subsequent proteasomal degradation. The chain is V-type proton ATPase subunit G 1 (ATP6V1G1) from Homo sapiens (Human).